Reading from the N-terminus, the 513-residue chain is Autophagy-related protein 18 (513 aa).

Residues 2–40 (SDLPIINFINFNQNGTCISIGTSQGFKIFNCEPFGRFYQ) form a WD 1 repeat. The segment at 167–225 (NNINIKKSDAAEDPLRKDHFAYDPSDHSHPQSTTESTSNNHNRTYSSGNNNNTNSNPNK) is disordered. Over residues 172–195 (KKSDAAEDPLRKDHFAYDPSDHSH) the composition is skewed to basic and acidic residues. Residues 205 to 225 (NNHNRTYSSGNNNNTNSNPNK) are compositionally biased toward low complexity. One copy of the WD 2 repeat lies at 248–288 (AHKGEIAALKLSADGTLLATASEKGTIIRVFNVENGSKVYQ). The interval 289-292 (FRRG) is necessary for proper localization to vacuole membrane. The L/FRRG motif motif lies at 289–293 (FRRGT). The stretch at 293-332 (TYSTKISSLSFSKDNQFLAVCSSSKTVHIFKLGEKIIDNT) is one WD 3 repeat. The interval 333–398 (KPNELNSDDD…TVGRMIRKSS (66 aa)) is disordered. Residues 338-369 (NSDDDMDDDLLPQFENGDDEEEVDEETLDEEA) are compositionally biased toward acidic residues.

This sequence belongs to the WD repeat PROPPIN family. As to quaternary structure, component of the PI(3,5)P2 regulatory complex. Interacts with ATG2 and ATG9. The ATG2-ATG18 complex is essential for autophagosome formation.

The protein resides in the preautophagosomal structure membrane. Its subcellular location is the vacuole membrane. It is found in the endosome membrane. Its function is as follows. Component of the PI(3,5)P2 regulatory complex that regulates both the synthesis and turnover of phosphatidylinositol 3,5-bisphosphate (PtdIns(3,5)P2). Plays an important role in osmotically-induced vacuole fragmentation. Required for cytoplasm to vacuole transport (Cvt) vesicle formation, pexophagy and starvation-induced autophagy. Involved in correct ATG9 trafficking to the pre-autophagosomal structure. With ATG2, protects ATG8 from ATG4-mediated cleavage. The sequence is that of Autophagy-related protein 18 from Kluyveromyces marxianus (strain DMKU3-1042 / BCC 29191 / NBRC 104275) (Yeast).